The chain runs to 245 residues: Thioredoxin-like 1-2, chloroplastic (245 aa).

The transit peptide at 1–92 (MDAISSLGTN…TNHNMLEIQS (92 aa)) directs the protein to the chloroplast. The region spanning 93–194 (ANHLVDSLLN…FKKALDKHGS (102 aa)) is the Thioredoxin domain. Residues Cys117 and Cys120 each act as nucleophile in the active site. An intrachain disulfide couples Cys117 to Cys120.

The protein belongs to the thioredoxin family.

Its subcellular location is the plastid. It is found in the chloroplast. Probable thiol-disulfide oxidoreductase that may participate in various redox reactions. The polypeptide is Thioredoxin-like 1-2, chloroplastic (Arabidopsis thaliana (Mouse-ear cress)).